Here is a 63-residue protein sequence, read N- to C-terminus: MLGQSIRRFTTSVVRRSHYEEGPGKNLPFSVENKWRLLAMMTLYFGSGFAAPFFIVRHQLLKK.

The transit peptide at 1-16 (MLGQSIRRFTTSVVRR) directs the protein to the mitochondrion. Residues 17–33 (SHYEEGPGKNLPFSVEN) are Mitochondrial matrix-facing. The residue at position 25 (K25) is an N6-acetyllysine; alternate. K25 carries the post-translational modification N6-succinyllysine; alternate. The helical transmembrane segment at 34 to 60 (KWRLLAMMTLYFGSGFAAPFFIVRHQL) threads the bilayer. The Mitochondrial intermembrane portion of the chain corresponds to 61–63 (LKK).

Belongs to the cytochrome c oxidase VIIc family. As to quaternary structure, component of the cytochrome c oxidase (complex IV, CIV), a multisubunit enzyme composed of 14 subunits. The complex is composed of a catalytic core of 3 subunits MT-CO1, MT-CO2 and MT-CO3, encoded in the mitochondrial DNA, and 11 supernumerary subunits COX4I, COX5A, COX5B, COX6A, COX6B, COX6C, COX7A, COX7B, COX7C, COX8 and NDUFA4, which are encoded in the nuclear genome. The complex exists as a monomer or a dimer and forms supercomplexes (SCs) in the inner mitochondrial membrane with NADH-ubiquinone oxidoreductase (complex I, CI) and ubiquinol-cytochrome c oxidoreductase (cytochrome b-c1 complex, complex III, CIII), resulting in different assemblies (supercomplex SCI(1)III(2)IV(1) and megacomplex MCI(2)III(2)IV(2)). Interacts with RAB5IF.

It localises to the mitochondrion inner membrane. The protein operates within energy metabolism; oxidative phosphorylation. Its function is as follows. Component of the cytochrome c oxidase, the last enzyme in the mitochondrial electron transport chain which drives oxidative phosphorylation. The respiratory chain contains 3 multisubunit complexes succinate dehydrogenase (complex II, CII), ubiquinol-cytochrome c oxidoreductase (cytochrome b-c1 complex, complex III, CIII) and cytochrome c oxidase (complex IV, CIV), that cooperate to transfer electrons derived from NADH and succinate to molecular oxygen, creating an electrochemical gradient over the inner membrane that drives transmembrane transport and the ATP synthase. Cytochrome c oxidase is the component of the respiratory chain that catalyzes the reduction of oxygen to water. Electrons originating from reduced cytochrome c in the intermembrane space (IMS) are transferred via the dinuclear copper A center (CU(A)) of subunit 2 and heme A of subunit 1 to the active site in subunit 1, a binuclear center (BNC) formed by heme A3 and copper B (CU(B)). The BNC reduces molecular oxygen to 2 water molecules using 4 electrons from cytochrome c in the IMS and 4 protons from the mitochondrial matrix. In Sus scrofa (Pig), this protein is Cytochrome c oxidase subunit 7C, mitochondrial (COX7C).